The sequence spans 1485 residues: Chromosome partition protein MukB (1485 aa).

Residue 34 to 41 (GGNGAGKS) participates in ATP binding. Coiled-coil stretches lie at residues 337–480 (LNLV…QAYQ) and 509–605 (QHLA…PVWL). A flexible hinge region spans residues 666 to 783 (PSGAEDARLI…EVPLFGRAAR (118 aa)). 2 coiled-coil regions span residues 835-915 (EAEI…IQQH) and 977-1116 (GMLT…AKAG).

This sequence belongs to the SMC family. MukB subfamily. In terms of assembly, homodimerization via its hinge domain. Binds to DNA via its C-terminal region. Interacts, and probably forms a ternary complex, with MukE and MukF via its C-terminal region. The complex formation is stimulated by calcium or magnesium. Interacts with tubulin-related protein FtsZ.

It is found in the cytoplasm. The protein localises to the nucleoid. Its function is as follows. Plays a central role in chromosome condensation, segregation and cell cycle progression. Functions as a homodimer, which is essential for chromosome partition. Involved in negative DNA supercoiling in vivo, and by this means organize and compact chromosomes. May achieve or facilitate chromosome segregation by condensation DNA from both sides of a centrally located replisome during cell division. The protein is Chromosome partition protein MukB of Yersinia pseudotuberculosis serotype IB (strain PB1/+).